A 178-amino-acid chain; its full sequence is Large ribosomal subunit protein uL6 (178 aa).

It belongs to the universal ribosomal protein uL6 family. Part of the 50S ribosomal subunit.

This protein binds to the 23S rRNA, and is important in its secondary structure. It is located near the subunit interface in the base of the L7/L12 stalk, and near the tRNA binding site of the peptidyltransferase center. The sequence is that of Large ribosomal subunit protein uL6 from Aliarcobacter butzleri (strain RM4018) (Arcobacter butzleri).